We begin with the raw amino-acid sequence, 600 residues long: Pyranose dehydrogenase 2 (600 aa).

An N-terminal signal peptide occupies residues 1 to 25 (MLSRVAKLNSRLVSLALLGSQIAFG). 2 N-linked (GlcNAc...) asparagine glycosylation sites follow: N99 and N114. Tele-8alpha-FAD histidine is present on H127. 3 N-linked (GlcNAc...) asparagine glycosylation sites follow: N199, N275, and N342. H535 functions as the Proton acceptor in the catalytic mechanism. Residue H579 is part of the active site.

Belongs to the GMC oxidoreductase family. In terms of assembly, monomer. Requires FAD as cofactor. In terms of processing, N-glycosylated.

It is found in the secreted. It catalyses the reaction pyranose + acceptor = pyranos-2-ulose + reduced acceptor.. The enzyme catalyses pyranose + acceptor = pyranos-3-ulose + reduced acceptor.. The catalysed reaction is pyranose + acceptor = pyranos-2,3-diulose + reduced acceptor.. It carries out the reaction a pyranoside + acceptor = a pyranosid-3-ulose + reduced acceptor.. It catalyses the reaction a pyranoside + acceptor = a pyranosid-3,4-diulose + reduced acceptor.. Functionally, catalyzes the single-oxidation or sequential double oxidation reaction of carbohydrates primarily at carbon-2 and/or carbon-3 with the concomitant reduction of the flavin. The enzyme exhibits a broad sugar substrate specificity, oxidizing different aldopyranoses to the corresponding C-1, C-2, C-3 or C-1,2, C-2,3 and C-3,4 (di)dehydro sugars with substrate-specific regioselectivity. Accepts only a narrow range of electron acceptors such as substituted benzoquinones and complexed metal ions and reacts extremely slowly with O(2) as acceptor. May play a role in the natural recycling of plant matter by oxidizing all major monosaccharides in lignocellulose and by reducing quinone compounds or reactive radical species generated during lignin depolymerization. This is Pyranose dehydrogenase 2 from Leucoagaricus meleagris (Western flat-topped agaric).